The following is a 376-amino-acid chain: UDP-N-acetylglucosamine--N-acetylmuramyl-(pentapeptide) pyrophosphoryl-undecaprenol N-acetylglucosamine transferase (376 aa).

UDP-N-acetyl-alpha-D-glucosamine-binding positions include 11–13 (TGG), Asn117, Arg160, Ser208, and Gln310.

This sequence belongs to the glycosyltransferase 28 family. MurG subfamily.

It localises to the cell inner membrane. The enzyme catalyses di-trans,octa-cis-undecaprenyl diphospho-N-acetyl-alpha-D-muramoyl-L-alanyl-D-glutamyl-meso-2,6-diaminopimeloyl-D-alanyl-D-alanine + UDP-N-acetyl-alpha-D-glucosamine = di-trans,octa-cis-undecaprenyl diphospho-[N-acetyl-alpha-D-glucosaminyl-(1-&gt;4)]-N-acetyl-alpha-D-muramoyl-L-alanyl-D-glutamyl-meso-2,6-diaminopimeloyl-D-alanyl-D-alanine + UDP + H(+). The protein operates within cell wall biogenesis; peptidoglycan biosynthesis. Cell wall formation. Catalyzes the transfer of a GlcNAc subunit on undecaprenyl-pyrophosphoryl-MurNAc-pentapeptide (lipid intermediate I) to form undecaprenyl-pyrophosphoryl-MurNAc-(pentapeptide)GlcNAc (lipid intermediate II). This Rickettsia peacockii (strain Rustic) protein is UDP-N-acetylglucosamine--N-acetylmuramyl-(pentapeptide) pyrophosphoryl-undecaprenol N-acetylglucosamine transferase.